Reading from the N-terminus, the 642-residue chain is Fimbrin (642 aa).

EF-hand domains follow at residues 16 to 50 and 51 to 86; these read EDLFSTIEKFRAIDLDDKGWVEKQQALEAVSKDGD and ATYDEARETLKHVGVDASGRVELDDYVGLVAKLRES. Ca(2+) is bound by residues D29, D31, W35, D66, S68, R70, and D75. Actin-binding stretches follow at residues 125-394 and 395-642; these read IVAG…GLEP and IQEE…TLNK. Calponin-homology (CH) domains lie at 139–259, 287–390, 411–521, and 534–642; these read EEER…RRGL, LPPE…NTHP, EREA…RRNI, and DMSD…TLNK.

Functionally, binds to actin, and functionally associates with actin structures involved in the development and maintenance of cell polarity. The sequence is that of Fimbrin (SAC6) from Saccharomyces cerevisiae (strain ATCC 204508 / S288c) (Baker's yeast).